The chain runs to 178 residues: Large ribosomal subunit protein bL25 (178 aa).

The protein belongs to the bacterial ribosomal protein bL25 family. CTC subfamily. As to quaternary structure, part of the 50S ribosomal subunit; part of the 5S rRNA/L5/L18/L25 subcomplex. Contacts the 5S rRNA. Binds to the 5S rRNA independently of L5 and L18.

Its function is as follows. This is one of the proteins that binds to the 5S RNA in the ribosome where it forms part of the central protuberance. The sequence is that of Large ribosomal subunit protein bL25 from Sulfurimonas denitrificans (strain ATCC 33889 / DSM 1251) (Thiomicrospira denitrificans (strain ATCC 33889 / DSM 1251)).